A 422-amino-acid chain; its full sequence is Probable metallocarboxypeptidase A (422 aa).

Positions 1 to 17 (MRSVLSLALLAVNVVTA) are cleaved as a signal peptide. Residues 18–112 (AVVAPFDYSG…FEAYSAGYAP (95 aa)) constitute a propeptide, activation peptide. Residues 119–419 (SYHSYQDHLS…AGTVAMLKAV (301 aa)) enclose the Peptidase M14 domain. Positions 179 and 182 each coordinate Zn(2+). Residues 179–182 (HARE), arginine 237, and 254–255 (NR) each bind substrate. The cysteines at positions 248 and 271 are disulfide-linked. Position 309 (histidine 309) interacts with Zn(2+). Position 310 to 311 (310 to 311 (SY)) interacts with substrate. Glutamate 385 acts as the Proton donor/acceptor in catalysis.

The protein belongs to the peptidase M14 family. Zn(2+) is required as a cofactor.

Its subcellular location is the secreted. In terms of biological role, extracellular metalloprotease that contributes to pathogenicity. In Trichophyton verrucosum (strain HKI 0517), this protein is Probable metallocarboxypeptidase A (MCPA).